An 894-amino-acid polypeptide reads, in one-letter code: Microsomal triglyceride transfer protein large subunit (894 aa).

The first 18 residues, 1 to 18 (MILLAVLFLCFISSYSAS), serve as a signal peptide directing secretion. Residues 28–662 (LNNDRLYKLK…YVGKTPLHAI (635 aa)) form the Vitellogenin domain. An intrachain disulfide couples Cys-174 to Cys-194.

Heterodimer; heterodimerizes with the protein disulfide isomerase (P4HB/PDI). Interacts with APOB. Interacts with PRAP1.

It localises to the endoplasmic reticulum. The protein localises to the golgi apparatus. The catalysed reaction is a 1,2-diacyl-sn-glycero-3-phosphocholine(in) = a 1,2-diacyl-sn-glycero-3-phosphocholine(out). It carries out the reaction a 1,2-diacyl-sn-glycero-3-phosphoethanolamine(in) = a 1,2-diacyl-sn-glycero-3-phosphoethanolamine(out). It catalyses the reaction a cholesterol ester(in) = a cholesterol ester(out). The enzyme catalyses a triacyl-sn-glycerol(in) = a triacyl-sn-glycerol(out). In terms of biological role, catalyzes the transport of triglyceride, cholesteryl ester, and phospholipid between phospholipid surfaces. Required for the assembly and secretion of plasma lipoproteins that contain apolipoprotein B. May be involved in regulating cholesteryl ester biosynthesis in cells that produce lipoproteins. The sequence is that of Microsomal triglyceride transfer protein large subunit (MTTP) from Sus scrofa (Pig).